Reading from the N-terminus, the 211-residue chain is Mediator of RNA polymerase II transcription subunit 20 (211 aa).

The protein belongs to the Mediator complex subunit 20 family. Component of the Mediator complex.

It localises to the nucleus. Component of the Mediator complex, a coactivator involved in the regulated transcription of nearly all RNA polymerase II-dependent genes. Mediator functions as a bridge to convey information from gene-specific regulatory proteins to the basal RNA polymerase II transcription machinery. Mediator is recruited to promoters by direct interactions with regulatory proteins and serves as a scaffold for the assembly of a functional preinitiation complex with RNA polymerase II and the general transcription factors. This is Mediator of RNA polymerase II transcription subunit 20 (SRB2) from Kluyveromyces lactis (strain ATCC 8585 / CBS 2359 / DSM 70799 / NBRC 1267 / NRRL Y-1140 / WM37) (Yeast).